A 496-amino-acid chain; its full sequence is Cytochrome P450 monooxygenase cle4 (496 aa).

The helical transmembrane segment at 12–34 (FFTSPFPLTVGILSISLSGVLWY) threads the bilayer. Residue C435 coordinates heme.

Belongs to the cytochrome P450 family. Heme serves as cofactor.

Its subcellular location is the membrane. Its pathway is secondary metabolite biosynthesis; terpenoid biosynthesis. In terms of biological role, cytochrome P450 monooxygenase; part of the cluster A that mediates the biosynthesis of chevalone E and its oxidized derivatives that possess a unique five-membered lactone ring and can synergistically enhance the cytotoxicity of doxorubicin (DOX) in breast cancer cells. Within the pathway, cle4 is involved in hydroxylation of the chavalone E scaffold at positions C-11 and C-12 and contributes with cle2 to the production of seven oxidation derivatives. The molecular scaffold is commonly biosynthesized by a series of enzymes including the non-reducing polyketide synthase (NR-PKS) cle1 that produces the alpha-pyrone triacetic acid lactone (TAL); The membrane-bound prenyltransferase cle5 that accepts TAL as its substrate to perform a C-3 geranylgeranylation reaction, in which the pathway-dedicated GGPS cle6 is required to provide GGPP, the other substrate of cle5; the FAD-dependent monooxygenase Cle3 that forms an (S)-epoxide ring at the terminal olefin of the geranylgeranyl group; and the terpene cyclase Cle7 that catalyzes the cyclization of the prenyl group that yields the pentacyclic pathway intermediate chevalone E. Chevalone E can derivatize into seven new oxidized analogs by the cytochrome P450 monooxygenases cle2 (acting at C-20) and cle4 (acting at C-11 and C-12). In Aspergillus versicolor, this protein is Cytochrome P450 monooxygenase cle4.